A 922-amino-acid polypeptide reads, in one-letter code: MVCEMETDQIEEMDVEVLSSMWPEDVGTEADKQFNVEKPAGDLDTLKEVTIETRTIADMTRLPNLLNSTHQGSSQLTNLVKQWEYMQDNAVRLLKEELKNLDRQREEAEAKELKIIEEYKFESNEPENVPVLDETSDLFRRFRQKKRDALVDSKKIEIYEEFDTVAYWKQKALSLEKMLEASTERERRLMEKLSESLKTMESQSAPVQELTQNLKRAEGFLHFILQNAPIVMGHQDKDLRYLFIYNKYPSLREQDILGKTDVEIFHGGGVKESEDFKREVLEKGKASKREITFTTDLFGSKTFLIYVEPVYNKAGEKIGINYMGMEVTDQVVKREKMAKLREDNAVRKAMESELNKTIHITEETMRAKQMLATMSHEIRSPLSGVVGMAEILSTTKLDKEQRQLLNVMISSGDLVLQLINDILDLSKVESGVMRLEATKFRPREVVKHVLQTAAASLKKSLTLEGNIADDVPIEVVGDVLRIRQILTNLISNAIKFTHEGNVGIKLQVISEPSFVRDNALNADTEEHEQNGLTETSVWICCDVWDTGIGIPENALPCLFKKYMQASADHARKYGGTGLGLAICKQLVELMGGQLTVTSRVSEGSTFTFILPYKVGRSDDYSDDQDEFSDMADQQSEPDDTAEGYFQFKPLLGSIYSNGGPGISNDFLPHKVMLTSPIKLINGFVADPSNNTGQSEMLQLENGGYMDESKLETSSGHCPESAHQYENGNGRCFSKESESCSSSQASSEGGTLEMESELTVSSHREEEKAETEVKETSKPKILLVEDNKINIMVAKSMMKQLGHTMDIANNGVEAITAINSSSYDLVLMDVCMPVLDGLKATRLIRSYEETGNWNAAIEAGVDISTSENEQVCMRPTNRLPIIAMTANTLAESSEECYANGMDSFISKPVTLQKLRECLQQYLH.

2 coiled-coil regions span residues 86–120 and 169–205; these read MQDNAVRLLKEELKNLDRQREEAEAKELKIIEEYK and KQKALSLEKMLEASTERERRLMEKLSESLKTMESQSA. A Histidine kinase domain is found at 373 to 614; the sequence is TMSHEIRSPL…TFTFILPYKV (242 aa). At His376 the chain carries Phosphohistidine; by autocatalysis. Disordered stretches follow at residues 620-639 and 728-773; these read YSDDQDEFSDMADQQSEPDD and NGRC…TEVK. A compositionally biased stretch (low complexity) spans 738–747; the sequence is SCSSSQASSE. Basic and acidic residues predominate over residues 761-773; the sequence is SHREEEKAETEVK. Residues 779 to 921 enclose the Response regulatory domain; it reads KILLVEDNKI…KLRECLQQYL (143 aa). Positions 785, 828, and 830 each coordinate Mg(2+). 4-aspartylphosphate is present on Asp828.

In terms of assembly, interacts with AHP1, APH2, APH3, APH5 and APH6, but not with APH4. In terms of tissue distribution, present in light-grown but not in etiolated seedlings. Mostly expressed in roots flowers and siliques, and, to a lower extent, in stems and leaves, especially in guard cells.

The protein resides in the cell membrane. Its subcellular location is the cytoplasm. The enzyme catalyses ATP + protein L-histidine = ADP + protein N-phospho-L-histidine.. Functions as a histidine kinase and transmits the stress signal to a downstream MAPK cascade. This protein undergoes an ATP-dependent autophosphorylation at a conserved histidine residue in the kinase core, and a phosphoryl group is then transferred to a conserved aspartate residue in the receiver domain. Negative regulator of the ETR1-dependent abscisic acid (ABA) and ethylene signaling pathway that inhibits the root elongation. Promotes stomatal closure. Regulates stomatal opening by integrating multiple signals via hydrogen peroxide H(2)O(2) homeostasis in guard cells in an ABA-independent manner. May contribute to basal defense mechanisms by closing stomata in the presence of bacterial pathogens. Regulates both hormone levels and ROS production in response to stress. Required for full immunity to bacterial pathogen and necrotrophic fungus. The sequence is that of Histidine kinase 5 (AHK5) from Arabidopsis thaliana (Mouse-ear cress).